The sequence spans 194 residues: Imidazoleglycerol-phosphate dehydratase (194 aa).

Belongs to the imidazoleglycerol-phosphate dehydratase family.

Its subcellular location is the cytoplasm. The catalysed reaction is D-erythro-1-(imidazol-4-yl)glycerol 3-phosphate = 3-(imidazol-4-yl)-2-oxopropyl phosphate + H2O. The protein operates within amino-acid biosynthesis; L-histidine biosynthesis; L-histidine from 5-phospho-alpha-D-ribose 1-diphosphate: step 6/9. The sequence is that of Imidazoleglycerol-phosphate dehydratase from Chloroherpeton thalassium (strain ATCC 35110 / GB-78).